The following is a 613-amino-acid chain: Ribosome-associated molecular chaperone SSB2 (613 aa).

A2 carries the N-acetylalanine modification. The tract at residues 2-391 (AEGVFQGAIG…ILTGQSTSDE (390 aa)) is nucleotide binding domain (NBD). Position 16 to 18 (16 to 18 (TTY)) interacts with ATP. Position 47 is a phosphothreonine (T47). Residues K73, 205-207 (GGT), 271-278 (ERAKRTLS), and G342 each bind ATP. An inter-domain linker region spans residues 392–402 (TKDLLLLDVAP). The interval 403-613 (LSLGVGMQGD…RVVTKAMSSR (211 aa)) is substrate binding domain (SBD). The Contributes to ribosome binding signature appears at 428-430 (KRR). A Phosphothreonine modification is found at T431. Residues 516 to 612 (SEEIEKMVNQ…KRVVTKAMSS (97 aa)) are lid domain (SBDalpha). The short motif at 574–582 (IEAALSDAL) is the Nuclear export signal element. A required for interaction with ribosomes region spans residues 601–613 (GLKRVVTKAMSSR).

It belongs to the heat shock protein 70 family. Ssb-type Hsp70 subfamily. Binds to ribosomes. Binds close to the ribosomal tunnel exit via contacts with both ribosomal proteins RPL35, RPL39 and RPL19, and rRNA. Directly interacts with nascent polypeptides. This interaction is dependent on the ribosome-associated complex (RAC). Interacts with SSE1.

It is found in the cytoplasm. It catalyses the reaction ATP + H2O = ADP + phosphate + H(+). Its function is as follows. Ribosome-bound, Hsp70-type chaperone that assists in the cotranslational folding of newly synthesized proteins in the cytosol. Stimulates folding by interacting with nascent chains, binding to short, largely hydrophobic sequences exposed by unfolded proteins, thereby stabilizing longer, more slowly translated, and aggregation-prone nascent polypeptides and domains that cannot fold stably until fully synthesized. The Hsp70-protein substrate interaction depends on ATP-binding and on allosteric regulation between the NBD and the SBD. The ATP-bound state is characterized by a fast exchange rate of substrate (low affinity state), while in the ADP-bound state exchange is much slower (high affinity state). During the Hsp70 cycle, the chaperone switches between the ATP-bound state (open conformation) and the ADP-bound state (closed conformation) by major conformational rearrangements involving mainly the lid domain. Ssb cooperates with a specific Hsp40/Hsp70 co-chaperone termed the ribosome-associated complex (RAC), which stimulates the ATPase activity of the ribosome-associated pool of Ssbs and switches it to the high affinity substrate binding state. Hsp110 chaperone SSE1 and FES1 act as nucleotide exchange factors that cause substrate release. This Saccharomyces cerevisiae (strain ATCC 204508 / S288c) (Baker's yeast) protein is Ribosome-associated molecular chaperone SSB2.